Reading from the N-terminus, the 217-residue chain is MNIKDEHIDSVCSLLDQLVGNVSFKNLFTGYGLFHKEETMFAIWQNKKLYLRGEGVLAIQLTKLGCEPFTTNELNKRFVLSQYYALSDQILRSNRLCRKLIILSIKQILEQKLECTLRKLNRLKDLPNLTIKHERALIKVGITNVAMLREIGAENALVELKKSGSGATLDFYWKLVCALQNKNSQMLSQAEKERLLKKLNEVWRKNGLKGYRKLDDE.

Belongs to the Sxy/TfoX family.

Required for DNA transformation. Positively regulates genes required for DNA transformation (late competence-specific genes) in association with CRP. Required for expression of the late competence-specific gene, com101A. Required for expression of the dprABC operon. This is DNA transformation protein TfoX from Haemophilus influenzae (strain ATCC 51907 / DSM 11121 / KW20 / Rd).